The primary structure comprises 421 residues: SH2 domain-containing protein 4A (421 aa).

Phosphoserine is present on residues serine 117 and serine 123. The disordered stretch occupies residues 132–271 (DLQAMKKTEP…FLQPLGIPPK (140 aa)). Composition is skewed to basic and acidic residues over residues 163–201 (TRKD…KEDS) and 211–230 (KAAD…DYKR). Serine 232 is modified (phosphoserine). Residues 315 to 407 (WFHGILTLKK…LGKELLLYPC (93 aa)) form the SH2 domain.

In terms of assembly, interacts with ESR1. As to expression, in the kidney, expressed only in the glomerulus. Expressed in T-cells, B-cells, macrophages and dendritic cells (at protein level). In adult, highest levels are found in muscle and lung with lower levels in kidney.

The protein localises to the cytoplasm. Functionally, inhibits estrogen-induced cell proliferation by competing with PLCG for binding to ESR1, blocking the effect of estrogen on PLCG and repressing estrogen-induced proliferation. May play a role in T-cell development and function. In Mus musculus (Mouse), this protein is SH2 domain-containing protein 4A (Sh2d4a).